The chain runs to 290 residues: Transposon Ty3-I Gag polyprotein (290 aa).

Serine 2 bears the N-acetylserine mark. The segment at 265–282 (RLCFYCKKEGHRLNECRA) adopts a CCHC-type zinc-finger fold.

Its subcellular location is the cytoplasm. Its function is as follows. Capsid protein (CA) is the structural component of the virus-like particle (VLP), forming the shell that encapsulates the retrotransposons dimeric RNA genome. Functionally, nucleocapsid protein p9 (NC) forms the nucleocore that coats the retro-elements dimeric RNA. Binds these RNAs through its zinc fingers. Promotes primer tRNA(i)-Met annealing to the multipartite primer-binding site (PBS), dimerization of Ty3 RNA and initiation of reverse transcription. This chain is Transposon Ty3-I Gag polyprotein (TY3A-I), found in Saccharomyces cerevisiae (strain ATCC 204508 / S288c) (Baker's yeast).